The primary structure comprises 643 residues: Phosphomethylpyrimidine synthase (643 aa).

Residues asparagine 248, methionine 277, tyrosine 306, histidine 342, 362-364, 403-406, and glutamate 442 each bind substrate; these read SRG and DGLR. Position 446 (histidine 446) interacts with Zn(2+). Position 469 (tyrosine 469) interacts with substrate. Histidine 510 provides a ligand contact to Zn(2+). 3 residues coordinate [4Fe-4S] cluster: cysteine 590, cysteine 593, and cysteine 598.

It belongs to the ThiC family. In terms of assembly, homodimer. [4Fe-4S] cluster is required as a cofactor.

It catalyses the reaction 5-amino-1-(5-phospho-beta-D-ribosyl)imidazole + S-adenosyl-L-methionine = 4-amino-2-methyl-5-(phosphooxymethyl)pyrimidine + CO + 5'-deoxyadenosine + formate + L-methionine + 3 H(+). The protein operates within cofactor biosynthesis; thiamine diphosphate biosynthesis. In terms of biological role, catalyzes the synthesis of the hydroxymethylpyrimidine phosphate (HMP-P) moiety of thiamine from aminoimidazole ribotide (AIR) in a radical S-adenosyl-L-methionine (SAM)-dependent reaction. This Paraburkholderia phymatum (strain DSM 17167 / CIP 108236 / LMG 21445 / STM815) (Burkholderia phymatum) protein is Phosphomethylpyrimidine synthase.